The chain runs to 304 residues: Tegument protein VP22 (304 aa).

Disordered regions lie at residues 23 to 68 (YSTV…PNDD) and 112 to 184 (STSN…GTPK). A compositionally biased stretch (basic and acidic residues) spans 43-58 (RENDLYDKQSVSKEND). Pro residues predominate over residues 123-142 (AQPPPRGAAAAPPPRVPTRP). Positions 143-154 (PTRAAATSTTPR) are enriched in low complexity. The short motif at 160 to 163 (PKQR) is the Nuclear localization signal element. A Nuclear export signal motif is present at residues 233-245 (LDRFLKAAAIRIL). The tract at residues 262–304 (STPDGYAAAGPNGYDRRPRTASRRRSLKCKPPADDFFDDTNSG) is disordered. The span at 280–289 (RTASRRRSLK) shows a compositional bias: basic residues.

Belongs to the alphaherpesvirinae VP22 tegument protein family. In terms of assembly, interacts with gE (via C-terminus); this interaction is necessary for the recruitment of VP22 to the Golgi and its packaging into virions. Interacts with gM (via C-terminus). Interacts with VP16; this interaction allows the formation of a tripartite complex composed of VP16, VP22 and UL41/VHS. Interacts with the capsid-binding protein UL16. Interacts with host CGAS. Post-translationally, highly phosphorylated in the host cell. Packaging is selective for underphosphorylated forms.

The protein resides in the virion tegument. The protein localises to the host cytoplasm. It localises to the host nucleus. It is found in the host Golgi apparatus. Its function is as follows. Tegument protein that plays different roles during the time course of infection. Participates in both the accumulation of viral mRNAs and viral protein translation at late time of infection. Modulates the RNase activity of the virion host shutoff protein UL41 probably to ensure necessary levels of key cellular mRNAs and proteins. Plays a role in microtubule reorganization that occurs after viral infection by stabilizing microtubule network. Plays a role in the inhibition of host innate immune system by targeting the CGAS enzymatic activity which is the principal cytosolic DNA sensor that detects invading viral DNA. Acts by mediating disruption of liquid-like droplets in which CGAS is activated, thereby preventing CGAS activity. This Equine herpesvirus 1 (strain Ab4p) (EHV-1) protein is Tegument protein VP22.